The following is a 404-amino-acid chain: Probable tRNA sulfurtransferase (404 aa).

Residues 60 to 165 form the THUMP domain; the sequence is HEVAESLKEI…DEAAYISYED (106 aa). ATP contacts are provided by residues 183 to 184, 208 to 209, Arg-265, Gly-287, and Gln-296; these read ML and HF.

Belongs to the ThiI family.

It localises to the cytoplasm. The catalysed reaction is [ThiI sulfur-carrier protein]-S-sulfanyl-L-cysteine + a uridine in tRNA + 2 reduced [2Fe-2S]-[ferredoxin] + ATP + H(+) = [ThiI sulfur-carrier protein]-L-cysteine + a 4-thiouridine in tRNA + 2 oxidized [2Fe-2S]-[ferredoxin] + AMP + diphosphate. It catalyses the reaction [ThiS sulfur-carrier protein]-C-terminal Gly-Gly-AMP + S-sulfanyl-L-cysteinyl-[cysteine desulfurase] + AH2 = [ThiS sulfur-carrier protein]-C-terminal-Gly-aminoethanethioate + L-cysteinyl-[cysteine desulfurase] + A + AMP + 2 H(+). It participates in cofactor biosynthesis; thiamine diphosphate biosynthesis. Catalyzes the ATP-dependent transfer of a sulfur to tRNA to produce 4-thiouridine in position 8 of tRNAs, which functions as a near-UV photosensor. Also catalyzes the transfer of sulfur to the sulfur carrier protein ThiS, forming ThiS-thiocarboxylate. This is a step in the synthesis of thiazole, in the thiamine biosynthesis pathway. The sulfur is donated as persulfide by IscS. The sequence is that of Probable tRNA sulfurtransferase from Streptococcus agalactiae serotype V (strain ATCC BAA-611 / 2603 V/R).